A 294-amino-acid polypeptide reads, in one-letter code: Cytidine deaminase (294 aa).

CMP/dCMP-type deaminase domains are found at residues 48 to 168 and 187 to 294; these read DDDA…FGPK and ALTD…RITF. 89-91 is a substrate binding site; the sequence is NME. H102 is a binding site for Zn(2+). Catalysis depends on E104, which acts as the Proton donor. Zn(2+)-binding residues include C129 and C132.

The protein belongs to the cytidine and deoxycytidylate deaminase family. As to quaternary structure, homodimer. Zn(2+) is required as a cofactor.

It carries out the reaction cytidine + H2O + H(+) = uridine + NH4(+). The enzyme catalyses 2'-deoxycytidine + H2O + H(+) = 2'-deoxyuridine + NH4(+). Its function is as follows. This enzyme scavenges exogenous and endogenous cytidine and 2'-deoxycytidine for UMP synthesis. The protein is Cytidine deaminase of Serratia proteamaculans (strain 568).